A 509-amino-acid polypeptide reads, in one-letter code: Coiled-coil domain-containing protein 181 (509 aa).

Disordered regions lie at residues 27–122 and 287–368; these read INDK…EDEE and LAQV…NEKK. 2 stretches are compositionally biased toward basic and acidic residues: residues 41–58 and 67–82; these read ACKK…KETE and DPDK…RRND. A compositionally biased stretch (polar residues) spans 319 to 333; it reads RIQSAGVSPVTSTYC. 2 coiled-coil regions span residues 335-377 and 418-488; these read SPRQ…VFKA and LKKK…RSKQ. A compositionally biased stretch (basic and acidic residues) spans 337-368; the sequence is RQKELQKQLERKRERLKREEEQRKLEEENEKK.

Belongs to the CCDC181 family. As to quaternary structure, homodimer. Interacts with HOOK1. Interacts with HOOK2. Interacts with HOOK3.

Its subcellular location is the cytoplasm. It localises to the cytoskeleton. It is found in the cell projection. The protein localises to the cilium. The protein resides in the flagellum. Its function is as follows. Microtubule-binding protein that localizes to the microtubular manchette of elongating spermatids. In Rattus norvegicus (Rat), this protein is Coiled-coil domain-containing protein 181.